The following is a 348-amino-acid chain: Elongation factor Ts (348 aa).

The interval 80–83 (TDFV) is involved in Mg(2+) ion dislocation from EF-Tu.

The protein belongs to the EF-Ts family.

It is found in the cytoplasm. Its function is as follows. Associates with the EF-Tu.GDP complex and induces the exchange of GDP to GTP. It remains bound to the aminoacyl-tRNA.EF-Tu.GTP complex up to the GTP hydrolysis stage on the ribosome. This is Elongation factor Ts from Streptococcus mutans serotype c (strain ATCC 700610 / UA159).